The following is a 531-amino-acid chain: Unconventional prefoldin RPB5 interactor (531 aa).

M1 is modified (N-acetylmethionine). Disordered stretches follow at residues 1 to 24 (MEPP…APLR), 224 to 381 (ELES…ELPA), 408 to 470 (KSRS…SGVS), and 500 to 531 (TIPE…QQRS). Residues 13 to 24 (PLAEASAAAPLR) show a composition bias toward low complexity. 2 stretches are compositionally biased toward polar residues: residues 257 to 266 (SPVTDSSAAS) and 280 to 296 (GQVN…NSYH). The segment covering 300–319 (DDDEEEEDDDDDDDEDDDNE) has biased composition (acidic residues). S369 carries the post-translational modification Phosphoserine; by RPS6KB1. Residues 414 to 424 (NSVCSDTSESS) are compositionally biased toward polar residues. S439 bears the Phosphoserine mark.

Belongs to the RNA polymerase II subunit 5-mediating protein family. Homodimer. Component of the PAQosome complex which is responsible for the biogenesis of several protein complexes and which consists of R2TP complex members RUVBL1, RUVBL2, RPAP3 and PIH1D1, URI complex members PFDN2, PFDN6, PDRG1, UXT and URI1 as well as ASDURF, POLR2E and DNAAF10/WDR92. Interacts with POLR2E/RPB5, RUVBL2 and RUVBL1. Interacts with PFDN2, PFDN4 and STAP1; the interactions are phosphorylation-dependent and occur in a growth-dependent manner in the mitochondrion. Interacts with UXT. Interacts with PPP1CC; the interaction is phosphorylation-dependent and occurs in a growth factor-dependent manner. Interacts (via the middle C-terminal region) with GTF2F1 and GTF2F2. Interacts with DMAP1. Interacts with TSC1 and TSC2. Interacts with PRPF8 and EFTUD2 in a ZNHIT2-dependent manner. Phosphorylation occurs in response to androgen treatment in prostate cancer cells in a mTOR-dependent manner. Phosphorylated; hyperhosphorylated in mitochondria in a mTORC-dependent signaling pathway. Phosphorylated at Ser-369 by RPS6KB1 in a growth factor- and rapamycin-dependent manner. S6K1-mediated mitochondrial phosphorylation at Ser-369 disrupts the URI1-PPP1CC complex in the mitochondrion, relieves PPP1CC phosphatase inhibition activity and hence engages a negative feedback diminishing RPS6KB1 kinase activity, preventing sustained S6K1-dependent signaling. Phosphorylated. Phosphorylation occurs essentially on serine residues. In terms of tissue distribution, expressed in the spinal cord, ganglia, choroid plexus and olfactors epithelium of the developing brain. Expressed in skin, lung, kidney, testis and muscles (at protein level). Expressed strongly in brain and kidney. Expressed weakly in skeletal muscle, lung and liver.

It is found in the nucleus. Its subcellular location is the cytoplasm. It localises to the mitochondrion. The protein localises to the cell projection. The protein resides in the dendrite. In terms of biological role, involved in gene transcription regulation. Acts as a transcriptional repressor in concert with the corepressor UXT to regulate androgen receptor (AR) transcription. May act as a tumor suppressor to repress AR-mediated gene transcription and to inhibit anchorage-independent growth in prostate cancer cells. Required for cell survival in ovarian cancer cells. Together with UXT, associates with chromatin to the NKX3-1 promoter region. Functionally, plays a central role in maintaining S6K1 signaling and BAD phosphorylation under normal growth conditions thereby protecting cells from potential deleterious effects of sustained S6K1 signaling. The URI1-PPP1CC complex acts as a central component of a negative feedback mechanism that counteracts excessive S6K1 survival signaling to BAD in response to growth factors. Mediates inhibition of PPP1CC phosphatase activity in mitochondria. Coordinates the regulation of nutrient-sensitive gene expression availability in a mTOR-dependent manner. Seems to be a scaffolding protein able to assemble a prefoldin-like complex that contains PFDs and proteins with roles in transcription and ubiquitination. This is Unconventional prefoldin RPB5 interactor (Uri1) from Mus musculus (Mouse).